Reading from the N-terminus, the 707-residue chain is Ribosomal RNA large subunit methyltransferase K/L (707 aa).

The region spanning 43-154 (QIYRCCLWSR…KDKAILGVDM (112 aa)) is the THUMP domain.

It belongs to the methyltransferase superfamily. RlmKL family.

It localises to the cytoplasm. The enzyme catalyses guanosine(2445) in 23S rRNA + S-adenosyl-L-methionine = N(2)-methylguanosine(2445) in 23S rRNA + S-adenosyl-L-homocysteine + H(+). It catalyses the reaction guanosine(2069) in 23S rRNA + S-adenosyl-L-methionine = N(2)-methylguanosine(2069) in 23S rRNA + S-adenosyl-L-homocysteine + H(+). Specifically methylates the guanine in position 2445 (m2G2445) and the guanine in position 2069 (m7G2069) of 23S rRNA. The protein is Ribosomal RNA large subunit methyltransferase K/L of Vibrio parahaemolyticus serotype O3:K6 (strain RIMD 2210633).